The sequence spans 106 residues: uncharacterized protein (106 aa).

It belongs to the HesB/IscA family.

This is an uncharacterized protein from Cereibacter sphaeroides (Rhodobacter sphaeroides).